The primary structure comprises 333 residues: Photosystem II assembly protein Ycf48 (333 aa).

A signal peptide spans 1 to 25; sequence MRVKMFKPLRLVLLIAVSVLLMAAR.

It belongs to the Ycf48 family. As to quaternary structure, part of early PSII assembly complexes which includes D1 (psbA) and PsbI; not found in mature PSII. Binds to the lumenal side of PSII complexes. Interacts with YidC.

Its subcellular location is the cellular thylakoid lumen. In terms of biological role, a factor required for optimal assembly of photosystem II (PSII), acting in the early stages of PSII assembly. Also plays a role in replacement of photodamaged D1 (psbA). Assists YidC in synthesis of chlorophyll-binding proteins. The protein is Photosystem II assembly protein Ycf48 of Synechococcus sp. (strain JA-2-3B'a(2-13)) (Cyanobacteria bacterium Yellowstone B-Prime).